The chain runs to 536 residues: Phosphoenolpyruvate carboxykinase (ATP) (536 aa).

Residues R61, Y195, and K201 each contribute to the substrate site. Residues K201, H220, and 236–244 (GLSGTGKTT) each bind ATP. 2 residues coordinate Mn(2+): K201 and H220. D257 is a binding site for Mn(2+). Residues E285, R322, and T447 each coordinate ATP. R322 contacts substrate.

The protein belongs to the phosphoenolpyruvate carboxykinase (ATP) family. Mn(2+) serves as cofactor.

The protein localises to the cytoplasm. The catalysed reaction is oxaloacetate + ATP = phosphoenolpyruvate + ADP + CO2. Its pathway is carbohydrate biosynthesis; gluconeogenesis. Involved in the gluconeogenesis. Catalyzes the conversion of oxaloacetate (OAA) to phosphoenolpyruvate (PEP) through direct phosphoryl transfer between the nucleoside triphosphate and OAA. This chain is Phosphoenolpyruvate carboxykinase (ATP), found in Mesorhizobium japonicum (strain LMG 29417 / CECT 9101 / MAFF 303099) (Mesorhizobium loti (strain MAFF 303099)).